A 340-amino-acid polypeptide reads, in one-letter code: MSEKNAYAKSGVDVEAGYEVVERIKKHVARTERAGVMGVLGGFGGMFDLSQTGVKEPVLVSGTDGVGTKLMLAIKYDKHDTIGQDCVAMCVNDIIAAGAEPLYFLDYIATGKNNPVKLEEVVSGVAEGCVQAGVALIGGETAEMPGMYGEDDYDLAGFAVGVAEKSQLIDGSKVKEGDILLGLASSGIHSNGYSLVRRVFADYTGKELLPELEGKQLKDVLLEPTRIYVRAALPLIKEELVNGIGHITGGGFIENVPRMFADDLTAEIDEDKVPVLPIFKALEKYGDIKHEEMFEIFNMGVGLMLAVSPENVNRVKELLDEPVYEIGRIIKKADDSVVIK.

The protein belongs to the AIR synthase family.

The protein localises to the cytoplasm. The catalysed reaction is 2-formamido-N(1)-(5-O-phospho-beta-D-ribosyl)acetamidine + ATP = 5-amino-1-(5-phospho-beta-D-ribosyl)imidazole + ADP + phosphate + H(+). Its pathway is purine metabolism; IMP biosynthesis via de novo pathway; 5-amino-1-(5-phospho-D-ribosyl)imidazole from N(2)-formyl-N(1)-(5-phospho-D-ribosyl)glycinamide: step 2/2. This Streptococcus pyogenes serotype M2 (strain MGAS10270) protein is Phosphoribosylformylglycinamidine cyclo-ligase.